Consider the following 129-residue polypeptide: Small ribosomal subunit protein uS11 (129 aa).

Belongs to the universal ribosomal protein uS11 family. As to quaternary structure, part of the 30S ribosomal subunit. Interacts with proteins S7 and S18. Binds to IF-3.

Its function is as follows. Located on the platform of the 30S subunit, it bridges several disparate RNA helices of the 16S rRNA. Forms part of the Shine-Dalgarno cleft in the 70S ribosome. In Yersinia pseudotuberculosis serotype O:1b (strain IP 31758), this protein is Small ribosomal subunit protein uS11.